The following is a 307-amino-acid chain: Probable RuBisCO transcriptional regulator (307 aa).

The 58-residue stretch at 4–61 folds into the HTH lysR-type domain; sequence FTLQQLRILKAVATEKNFTKAAELLYLSQPSLSKQIKTLEKNLDILLVNRENNKISLT. Residues 21 to 40 constitute a DNA-binding region (H-T-H motif); that stretch reads FTKAAELLYLSQPSLSKQIK.

It belongs to the LysR transcriptional regulatory family.

The protein localises to the plastid. Its subcellular location is the chloroplast. In terms of biological role, trans-acting transcriptional regulator of RuBisCO genes (rbcL and rbcS) expression. This Phaeodactylum tricornutum (strain CCAP 1055/1) protein is Probable RuBisCO transcriptional regulator (rbcR).